The primary structure comprises 330 residues: Phosphate acyltransferase (330 aa).

It belongs to the PlsX family. As to quaternary structure, homodimer. Probably interacts with PlsY.

It is found in the cytoplasm. It catalyses the reaction a fatty acyl-[ACP] + phosphate = an acyl phosphate + holo-[ACP]. It participates in lipid metabolism; phospholipid metabolism. Catalyzes the reversible formation of acyl-phosphate (acyl-PO(4)) from acyl-[acyl-carrier-protein] (acyl-ACP). This enzyme utilizes acyl-ACP as fatty acyl donor, but not acyl-CoA. This is Phosphate acyltransferase from Bacillus cereus (strain G9842).